The following is a 199-amino-acid chain: MRLRRVTEARLPTLWGNFLIVGFEENFTGHNHIALIYGNITGSDPVLTRIHSECLTGDALFSSRCDCGFQLKTALHCITEEKRGILIYHRQEGRNIGLLNKIRAYALQDNGADTVEANQCLGFAPDERDFTICADILKLLRVKKIRILTNNPKKVEILNKSCINITERVPLIVGRNPENSRYLDTKASKLGHLFYSYHK.

49–53 (RIHSE) is a binding site for GTP. Residues Cys-54, Cys-65, and Cys-67 each coordinate Zn(2+). GTP-binding positions include Gln-70, 92–94 (EGR), and Thr-114. The active-site Proton acceptor is the Asp-126. The Nucleophile role is filled by Arg-128. GTP contacts are provided by Thr-149 and Lys-154.

The protein belongs to the GTP cyclohydrolase II family. In terms of assembly, homodimer. The cofactor is Zn(2+).

The enzyme catalyses GTP + 4 H2O = 2,5-diamino-6-hydroxy-4-(5-phosphoribosylamino)-pyrimidine + formate + 2 phosphate + 3 H(+). Its pathway is cofactor biosynthesis; riboflavin biosynthesis; 5-amino-6-(D-ribitylamino)uracil from GTP: step 1/4. Its function is as follows. Catalyzes the conversion of GTP to 2,5-diamino-6-ribosylamino-4(3H)-pyrimidinone 5'-phosphate (DARP), formate and pyrophosphate. The chain is GTP cyclohydrolase-2 from Blochmanniella pennsylvanica (strain BPEN).